The primary structure comprises 2543 residues: Highly reducing polyketide synthase PKS2 (2543 aa).

Residues 4 to 425 (EPRIAVIGLS…GSNSAILLEG (422 aa)) form the Ketosynthase family 3 (KS3) domain. Active-site for beta-ketoacyl synthase activity residues include Cys-174, His-309, and His-349. Positions 573–902 (VFTGQGAQHA…TYLPTLFRGT (330 aa)) are malonyl-CoA:ACP transacylase (MAT) domain. Catalysis depends on Ser-662, which acts as the For malonyltransferase activity. The tract at residues 969–1101 (HPLLGRKISP…GQIEAEMTDM (133 aa)) is N-terminal hotdog fold. Residues 969-1281 (HPLLGRKISP…FRNIGSAEEV (313 aa)) enclose the PKS/mFAS DH domain. Residues 969–1283 (HPLLGRKISP…NIGSAEEVID (315 aa)) are dehydratase (DH) domain. His-1001 serves as the catalytic Proton acceptor; for dehydratase activity. The tract at residues 1119 to 1281 (TGLKEHDINA…FRNIGSAEEV (163 aa)) is C-terminal hotdog fold. The active-site Proton donor; for dehydratase activity is the Asp-1188. Positions 1438–1631 (SKVLGYLTEY…LPSRYGTDKP (194 aa)) are methyltransferase (CMet) domain. Residues 1847 to 2159 (GSPDTIYFQR…SGEHMGKMVI (313 aa)) are enoylreductase (ER) domain. A ketoreductase (KR) domain region spans residues 2184–2359 (ATYLVAGGTR…YTVSIALPVV (176 aa)). Residues 2463 to 2540 (DPLIGLTEAM…ALATEILSQR (78 aa)) enclose the Carrier domain. Ser-2500 bears the O-(pantetheine 4'-phosphoryl)serine mark.

It functions in the pathway secondary metabolite biosynthesis. Highly reducing polyketide synthase; part of the gene cluster that mediates the biosynthesis of phomenoic acid, a long chain aliphatic carboxylic acid that does not appear to be essential for pathogenicity but may play a role in allowing to outcompete other fungi in the environmental niche via its antifungal properties. The polyketide synthase produces the long methylated aliphatic carboxylic acid chain of phomenoic acid. The cluster-specific cytochrome P450 monooxygenase may then hydroxylate the methyl group of carbon 31. The putative dehydrogenase YogA, which has no obvious role in phomenoic acid biosynthesis, may further modify phomenoic acid to produce a compound not identified yet. This chain is Highly reducing polyketide synthase PKS2, found in Leptosphaeria maculans (strain JN3 / isolate v23.1.3 / race Av1-4-5-6-7-8) (Blackleg fungus).